The chain runs to 2374 residues: Genome polyprotein (2374 aa).

Gly115 is lipidated: N-myristoyl glycine; by host. Disordered regions lie at residues 144–176 (GDMPTASTSEAPLGSNKGGSSTSPKSTSNGNVV) and 707–739 (GADGAEVQPAPTSDLSDGNPTTDPAPRDNFDYP). Low complexity predominate over residues 157–174 (GSNKGGSSTSPKSTSNGN). A compositionally biased stretch (polar residues) spans 716–728 (APTSDLSDGNPTT). The region spanning 1361 to 1525 (YSTALSAISL…VAFSAAAALQ (165 aa)) is the SF3 helicase domain. ATP is bound at residue 1387–1394 (GPPGTGKS). The N-myristoyl glycine; by host moiety is linked to residue Gly1600. The helical transmembrane segment at 1649-1669 (IFAASSFLSLIAATLTIVRCL) threads the bilayer. Positions 1677-1699 (GAYSGTPVPKPRKKDLPKQPVYS) are disordered. O-(5'-phospho-RNA)-tyrosine is present on Tyr1679. One can recognise a Peptidase C3 domain in the interval 1700-1889 (GPVRRQGFDP…FSARLTPERV (190 aa)). Residues His1748, Glu1779, and Cys1852 each act as for protease 3C activity in the active site. Positions 2126–2243 (SNVWSIDYSC…GSNQDFHPRE (118 aa)) constitute a RdRp catalytic domain. Catalysis depends on for RdRp activity residues Asp2132 and Asp2229.

In terms of assembly, interacts with capsid protein VP1. Interacts with capsid protein VP3. Interacts with capsid protein VP0. Interacts with capsid protein VP3. As to quaternary structure, interacts with capsid protein VP0. Interacts with capsid protein VP1. In terms of assembly, homodimer. Interacts with protein 2B. Interacts with protein 2C. Homodimer. Interacts with host ABCD3. Interacts with protein 2A. Interacts with host ACBD3. As to quaternary structure, homodimer. Interacts with host ABCD3. Interacts with protein 2A. Interacts with protein 3A. Interacts with protein 3C. Interacts with host ACBD3. In terms of assembly, homodimer. Interacts with host ABCD3 (via GOLD domain) and PI4KB; these interactions allow the formation of a viral protein/ACBD3/PI4KB complex in order to synthesize PI4P at the viral RNA replication sites. Interacts with protein 2C. Interacts with protein 3C. Protein 3C: Interacts with protein 2A. Protein 3C: Interacts with protein 2C. Post-translationally, specific enzymatic cleavages by the viral protease in vivo yield a variety of precursors and mature proteins. The leader protein-VP0 junction is cleaved by 3C proteinase. The VP1/2A junction is cleaved by the protein 3CD in association with protein 2A. In terms of processing, uridylylated by the polymerase and is covalently linked to the 5'-end of genomic RNA. This uridylylated form acts as a nucleotide-peptide primer for the polymerase.

Its subcellular location is the virion. The protein localises to the host cytoplasm. It localises to the host cytoplasmic vesicle membrane. It is found in the host Golgi apparatus membrane. It catalyses the reaction Selective cleavage of Gln-|-Gly bond in the poliovirus polyprotein. In other picornavirus reactions Glu may be substituted for Gln, and Ser or Thr for Gly.. The catalysed reaction is RNA(n) + a ribonucleoside 5'-triphosphate = RNA(n+1) + diphosphate. It carries out the reaction ATP + H2O = ADP + phosphate + H(+). Its function is as follows. Required for viral RNA replication and viral RNA encapsidation. Does not have any proteolytic activity. In terms of biological role, forms an icosahedral capsid of pseudo T=3 symmetry with capsid proteins VP0 and VP3. Together they form an icosahedral capsid composed of 60 copies of each VP0, VP1, and VP3. All the three latter proteins contain a beta-sheet structure called beta-barrel jelly roll. Forms an icosahedral capsid of pseudo T=3 symmetry with capsid proteins VP1 and VP3. Together they form an icosahedral capsid composed of 60 copies of each VP0, VP1, and VP3. All the three latter proteins contain a beta-sheet structure called beta-barrel jelly roll. Functionally, forms an icosahedral capsid of pseudo T=3 symmetry with capsid proteins VP0 and VP1. Together they form an icosahedral capsid composed of 60 copies of each VP0, VP1, and VP3. All the three latter proteins contain a beta-sheet structure called beta-barrel jelly roll. Its function is as follows. Required for viral RNA replication. Does not have any proteolytic activity. In terms of biological role, affects membrane integrity and causes an increase in membrane permeability. Induces and associates with structural rearrangements of intracellular membranes. Displays RNA-binding, nucleotide binding and NTPase activities. May play a role in virion morphogenesis and viral RNA encapsidation by interacting with the capsid protein VP3. Functionally, serves as membrane anchor via its hydrophobic domain. Plays an essential role in viral RNA replication by recruiting PI4KB at the viral replication sites, thereby allowing the formation of rearranged membranous structures where viral replication takes place. Its function is as follows. Forms a primer, VPg-pU, which is utilized by the polymerase for the initiation of RNA chains. In terms of biological role, cysteine protease that generates mature viral proteins from the precursor polyprotein. In addition to its proteolytic activity, it binds to viral RNA, and thus influences viral genome replication. RNA and substrate cooperatively bind to the protease. Replicates the genomic and antigenomic RNAs by recognizing replications specific signals. Performs VPg uridylylation. In Salivirus A (isolate Human/Nigeria/NG-J1/2007) (SV-A), this protein is Genome polyprotein.